A 206-amino-acid polypeptide reads, in one-letter code: Thymidylate kinase (206 aa).

Residue 16 to 23 (GIDGTGKS) coordinates ATP.

This sequence belongs to the thymidylate kinase family.

The catalysed reaction is dTMP + ATP = dTDP + ADP. Functionally, phosphorylation of dTMP to form dTDP in both de novo and salvage pathways of dTTP synthesis. In Akkermansia muciniphila (strain ATCC BAA-835 / DSM 22959 / JCM 33894 / BCRC 81048 / CCUG 64013 / CIP 107961 / Muc), this protein is Thymidylate kinase.